Consider the following 304-residue polypeptide: MADSGSEPRSLLLVHAHPDDESIDNGATMARYAAAGVNVTLVTCTLGEEGDVVVPELAHLGAAYEDRLADHRAGELDAAMAALGVTDHRILNEQNRYRDSGMMGSPSNDHPRSFWRADVEEAARSLAHIIRELRPQVLVTYGPDGGYGHPDHIQAHRVAMRAAQLAGQAGQADASQNARLPHAVAKIYWNCHPRSAARFSTKALRAEEQTPFLLDESAISVTDDSFATCVIDASDHLAAKSAALSAHRTQMTVQGAFFALSNNVGRLISGEEYYHLAYCRPDLAVDEPEDHAAPDLESDLFAGL.

Positions 17, 20, and 152 each coordinate Zn(2+).

The protein belongs to the MshB deacetylase family. It depends on Zn(2+) as a cofactor.

The enzyme catalyses 1D-myo-inositol 2-acetamido-2-deoxy-alpha-D-glucopyranoside + H2O = 1D-myo-inositol 2-amino-2-deoxy-alpha-D-glucopyranoside + acetate. Functionally, catalyzes the deacetylation of 1D-myo-inositol 2-acetamido-2-deoxy-alpha-D-glucopyranoside (GlcNAc-Ins) in the mycothiol biosynthesis pathway. This Catenulispora acidiphila (strain DSM 44928 / JCM 14897 / NBRC 102108 / NRRL B-24433 / ID139908) protein is 1D-myo-inositol 2-acetamido-2-deoxy-alpha-D-glucopyranoside deacetylase 2.